The following is a 329-amino-acid chain: Phospho-N-acetylmuramoyl-pentapeptide-transferase (329 aa).

9 helical membrane-spanning segments follow: residues 1-21 (MLLN…IGIP), 53-73 (MGGF…ALVF), 76-96 (FSPA…IGFL), 109-129 (GLTA…SYFI), 141-161 (ILSW…IWLV), 175-195 (GLAS…AVVH), 198-218 (YDVL…FVFN), 237-257 (FLAI…IGAV), and 309-329 (IVFW…YFAF).

Belongs to the glycosyltransferase 4 family. MraY subfamily. Mg(2+) serves as cofactor.

The protein resides in the cell membrane. It catalyses the reaction UDP-N-acetyl-alpha-D-muramoyl-L-alanyl-gamma-D-glutamyl-L-lysyl-D-alanyl-D-alanine + di-trans,octa-cis-undecaprenyl phosphate = Mur2Ac(oyl-L-Ala-gamma-D-Glu-L-Lys-D-Ala-D-Ala)-di-trans,octa-cis-undecaprenyl diphosphate + UMP. It functions in the pathway cell wall biogenesis; peptidoglycan biosynthesis. Catalyzes the initial step of the lipid cycle reactions in the biosynthesis of the cell wall peptidoglycan: transfers peptidoglycan precursor phospho-MurNAc-pentapeptide from UDP-MurNAc-pentapeptide onto the lipid carrier undecaprenyl phosphate, yielding undecaprenyl-pyrophosphoryl-MurNAc-pentapeptide, known as lipid I. This is Phospho-N-acetylmuramoyl-pentapeptide-transferase from Lactococcus lactis subsp. cremoris (strain MG1363).